Consider the following 391-residue polypeptide: GTPase Obg (391 aa).

An Obg domain is found at 1–159 (MKFIDEALIR…RDLQLELMLL (159 aa)). The 174-residue stretch at 160-333 (ADVGMLGLPN…LTRDIMDFIE (174 aa)) folds into the OBG-type G domain. GTP contacts are provided by residues 166–173 (GLPNAGKS), 191–195 (FTTLV), 213–216 (DIPG), 283–286 (NKID), and 314–316 (SAA). Mg(2+) contacts are provided by Ser-173 and Thr-193. Residues 361-391 (QNPITEDDWDDLDDDGWTEEDDEGVEFIYKP) are disordered. Acidic residues predominate over residues 365–385 (TEDDWDDLDDDGWTEEDDEGV).

Belongs to the TRAFAC class OBG-HflX-like GTPase superfamily. OBG GTPase family. Monomer. Requires Mg(2+) as cofactor.

The protein resides in the cytoplasm. Functionally, an essential GTPase which binds GTP, GDP and possibly (p)ppGpp with moderate affinity, with high nucleotide exchange rates and a fairly low GTP hydrolysis rate. Plays a role in control of the cell cycle, stress response, ribosome biogenesis and in those bacteria that undergo differentiation, in morphogenesis control. The chain is GTPase Obg from Glaesserella parasuis serovar 5 (strain SH0165) (Haemophilus parasuis).